Here is a 184-residue protein sequence, read N- to C-terminus: Type-1 fimbrial protein, A chain (184 aa).

A signal peptide spans 1 to 22 (MKHKLMTSTIASLMFVAGAAVA). A disulfide bond links cysteine 46 and cysteine 86.

The protein belongs to the fimbrial protein family.

It localises to the fimbrium. Fimbriae (also called pili), polar filaments radiating from the surface of the bacterium to a length of 0.5-1.5 micrometers and numbering 100-300 per cell, enable bacteria to colonize the epithelium of specific host organs. The sequence is that of Type-1 fimbrial protein, A chain (fimA) from Salmonella typhi.